Reading from the N-terminus, the 588-residue chain is D-3-phosphoglycerate dehydrogenase 3, chloroplastic (588 aa).

Residues 1-38 (MATSLNLSSIFSSSSRLVTTPSSVFPIRQRRRIILVTS) constitute a chloroplast transit peptide. Residues 195 to 196 (KV), Asp-215, 274 to 276 (VAR), and Asp-300 each bind NAD(+). The active site involves Arg-276. The active site involves Glu-305. Catalysis depends on His-324, which acts as the Proton donor. 324–327 (HLGA) contacts NAD(+). In terms of domain architecture, ACT spans 516-588 (VILCRQVDQP…AIEEFVFLKL (73 aa)).

This sequence belongs to the D-isomer specific 2-hydroxyacid dehydrogenase family. In terms of tissue distribution, expressed in aerial parts. Not detected in roots and meristematic tissue. Expressed in cotyledons, adult leaves, stigma and anther filaments. Detected in the embryo.

The protein localises to the plastid. The protein resides in the chloroplast. The enzyme catalyses (2R)-3-phosphoglycerate + NAD(+) = 3-phosphooxypyruvate + NADH + H(+). The protein operates within amino-acid biosynthesis; L-serine biosynthesis; L-serine from 3-phospho-D-glycerate: step 1/3. Its activity is regulated as follows. Partially inhibited by 1 mM serine. Its function is as follows. Involved in the plastidial phosphorylated pathway of serine biosynthesis (PPSB). This Arabidopsis thaliana (Mouse-ear cress) protein is D-3-phosphoglycerate dehydrogenase 3, chloroplastic (PGDH3).